A 580-amino-acid chain; its full sequence is Mucolipin-1 (580 aa).

Positions 1-38 are disordered; it reads MTAPAGPRGSETERLLTPNPGYGTQAGPSPAPPTPPEE. The Cytoplasmic portion of the chain corresponds to 1–65; sequence MTAPAGPRGS…FRAKGRKPCK (65 aa). Ser10 carries the phosphoserine modification. The Dileucine motif; mediates targeting to lysosomes signature appears at 11–16; it reads ETERLL. Residues 42-62 form an interaction with phosphoinositides region; that stretch reads RRRLKYFFMSPCDKFRAKGRK. A helical membrane pass occupies residues 66–86; it reads LMLQVVKILVVTVQLILFGLS. At 87–298 the chain is on the extracellular side; that stretch reads NQLAVTFREE…VFQHGDNSFR (212 aa). An extracellular/lumenal pore loop region spans residues 107-121; that stretch reads LGYSDGADDTFAAYT. A disulfide bridge links Cys166 with Cys192. Asn230 carries an N-linked (GlcNAc...) asparagine glycan. Cys253 and Cys284 are oxidised to a cystine. A helical transmembrane segment spans residues 299-321; sequence LLFDVVVILTCSLSFLLCARSLL. At 322 to 350 the chain is on the cytoplasmic side; sequence RGFLLQNEFVGFMWRQRGRVISLWERLEF. A helical transmembrane segment spans residues 351–371; the sequence is VNGWYILLVTSDVLTISGTIM. The Extracellular segment spans residues 372–382; sequence KIGIEAKNLAS. A helical transmembrane segment spans residues 383–405; the sequence is YDVCSILLGTSTLLVWVGVIRYL. Over 406-427 the chain is Cytoplasmic; that stretch reads TFFHNYNILIATLRVALPSVMR. A helical transmembrane segment spans residues 428–448; that stretch reads FCCCVAVIYLGYCFCGWIVLG. Topologically, residues 449-456 are extracellular; it reads PYHVKFRS. The segment at residues 457–477 is an intramembrane region (pore-forming); it reads LSMVSECLFSLINGDDMFVTF. Positions 469-474 match the Selectivity filter motif; it reads NGDDMF. Residues 478–491 are Extracellular-facing; the sequence is AAMQAQQGRSSLVW. A helical membrane pass occupies residues 492–513; sequence LFSQLYLYSFISLFIYMVLSLF. The Cytoplasmic portion of the chain corresponds to 514–580; the sequence is IALITGAYDT…PSEEHSLLVN (67 aa). A phosphoserine; by PAK mark is found at Ser557 and Ser559. The interval 565-567 is required for palmitoylation and association with membranes; that stretch reads CCC. A Dileucine internalization motif; mediates AP2 complex-dependent internalization motif is present at residues 573-578; the sequence is EEHSLL.

It belongs to the transient receptor (TC 1.A.4) family. Polycystin subfamily. MCOLN1 sub-subfamily. In terms of assembly, homotetramer. Homooligomer. Can heterooligomerize with MCOLN2 or MCOLN3; heteromeric assemblies have different channel properties as compared to the respective homooligomers and may be tissue-specific. Interacts with PDCD6. Interacts with TMEM163. Interacts with LAPTM4B. Post-translationally, palmitoylated; involved in association with membranes. In terms of processing, phosphorylation by PKA inhibits channel activity. Dephosphorylation increases activity. Proteolytically cleaved probably involving multiple lysosomal proteases including cathepsin B; inhibits lysosomal channel activity. In terms of tissue distribution, widely expressed in adult and fetal tissues.

Its subcellular location is the late endosome membrane. It localises to the lysosome membrane. The protein localises to the cytoplasmic vesicle membrane. It is found in the cell projection. The protein resides in the phagocytic cup. Its subcellular location is the cytoplasmic vesicle. It localises to the phagosome membrane. The protein localises to the cell membrane. The enzyme catalyses Ca(2+)(in) = Ca(2+)(out). The catalysed reaction is Fe(2+)(in) = Fe(2+)(out). It catalyses the reaction Mg(2+)(in) = Mg(2+)(out). It carries out the reaction K(+)(in) = K(+)(out). The enzyme catalyses Na(+)(in) = Na(+)(out). Its activity is regulated as follows. Channel activity is controlled by multiple regulatory mechanisms in different subcellular compartments. Channel function is transiently modulated by changes in Ca(2+) in a pH-dependent manner; pH changes modify the aggregation state of unitary channels; a negative cooperativity between extracellular/lumenal Ca(2+) and H(+) is suggested. Regulated by phosphoinositides in a compartment-specific manner: in lysosomes activated by PtdIns(3,5)P2 (Phosphatidylinositol 3,5-bisphosphate) and at the plasma membrane inhibited by PtdIns(4,5)P2 (Phosphatidylinositol 4,5-bisphosphate). Nonselective cation channel probably playing a role in the regulation of membrane trafficking events and of metal homeostasis. Acts as a Ca(2+)-permeable cation channel with inwardly rectifying activity. Proposed to play a major role in Ca(2+) release from late endosome and lysosome vesicles to the cytoplasm, which is important for many lysosome-dependent cellular events, including the fusion and trafficking of these organelles, exocytosis and autophagy. Required for efficient uptake of large particles in macrophages in which Ca(2+) release from the lysosomes triggers lysosomal exocytosis. May also play a role in phagosome-lysosome fusion. Involved in lactosylceramide trafficking indicative for a role in the regulation of late endocytic membrane fusion/fission events. By mediating lysosomal Ca(2+) release is involved in regulation of mTORC1 signaling and in mTOR/TFEB-dependent lysosomal adaptation to environmental cues such as nutrient levels. Seems to act as lysosomal active oxygen species (ROS) sensor involved in ROS-induced TFEB activation and autophagy. Also functions as a Fe(2+) permeable channel in late endosomes and lysosomes. Also permeable to Mg(2+), Na(+). K(+) and Cs(+). Proposed to play a role in zinc homeostasis probably implicating its association with TMEM163 In adaptive immunity, TRPML2 and TRPML1 may play redundant roles in the function of the specialized lysosomes of B cells. Functionally, may contribute to cellular lipase activity within the late endosomal pathway or at the cell surface which may be involved in processes of membrane reshaping and vesiculation, especially the growth of tubular structures. However, it is not known, whether it conveys the enzymatic activity directly, or merely facilitates the activity of an associated phospholipase. The chain is Mucolipin-1 from Homo sapiens (Human).